Reading from the N-terminus, the 605-residue chain is Protein Spindly (605 aa).

An N-acetylmethionine modification is found at M1. A coiled-coil region spans residues 2-442 (EADIITNLRC…ELKLKYEPEE (441 aa)). Phosphoserine is present on residues S513, S515, and S555. The disordered stretch occupies residues 544–580 (ALSERSGNTPNSPRLAAESKLQTEVKEGKETSSKLEK). Positions 564–580 (LQTEVKEGKETSSKLEK) are enriched in basic and acidic residues.

This sequence belongs to the Spindly family. As to quaternary structure, interacts with KNTC1 and ZW10. These interactions appear weak and may be transient or indirect. Interacts with dynein intermediate chain and dynactin (DCTN1). Interacts with the catalytically active form of USP45. Post-translationally, monoubiquitinated with'Lys-48' linkage. Deubiquitinated by USP45.

The protein resides in the cytoplasm. It is found in the cytoskeleton. The protein localises to the microtubule organizing center. It localises to the centrosome. Its subcellular location is the chromosome. The protein resides in the centromere. It is found in the kinetochore. The protein localises to the nucleus. It localises to the spindle pole. Required for the localization of dynein and dynactin to the mitotic kintochore. Dynein is believed to control the initial lateral interaction between the kinetochore and spindle microtubules and to facilitate the subsequent formation of end-on kinetochore-microtubule attachments mediated by the NDC80 complex. Also required for correct spindle orientation. Does not appear to be required for the removal of spindle assembly checkpoint (SAC) proteins from the kinetochore upon bipolar spindle attachment. Acts as an adapter protein linking the dynein motor complex to various cargos and converts dynein from a non-processive to a highly processive motor in the presence of dynactin. Facilitates the interaction between dynein and dynactin and activates dynein processivity (the ability to move along a microtubule for a long distance without falling off the track). Plays a role in cell migration. The sequence is that of Protein Spindly from Homo sapiens (Human).